We begin with the raw amino-acid sequence, 370 residues long: Cytochrome b (370 aa).

A run of 4 helical transmembrane segments spans residues 30 to 50 (FGSM…FLAF), 74 to 96 (WVFR…LHIF), 109 to 129 (VWMS…MGYV), and 175 to 195 (FFVL…GHLI). Heme b is bound by residues histidine 80 and histidine 94. Residues histidine 179 and histidine 193 each contribute to the heme b site. A ubiquinone is bound at residue histidine 198. 4 helical membrane passes run 221–240 (YLGK…VLSL), 284–304 (VLGV…ALVN), 316–336 (FLVF…QCTV), and 342–362 (ILSP…LFIF).

It belongs to the cytochrome b family. In terms of assembly, the main subunits of complex b-c1 are: cytochrome b, cytochrome c1 and the Rieske protein. The cofactor is heme b.

It localises to the mitochondrion inner membrane. Component of the ubiquinol-cytochrome c reductase complex (complex III or cytochrome b-c1 complex) that is part of the mitochondrial respiratory chain. The b-c1 complex mediates electron transfer from ubiquinol to cytochrome c. Contributes to the generation of a proton gradient across the mitochondrial membrane that is then used for ATP synthesis. In Caenorhabditis elegans, this protein is Cytochrome b.